Reading from the N-terminus, the 422-residue chain is 5-hydroxytryptamine receptor 1A (422 aa).

Topologically, residues 1-38 (MDVFSFGQGNNTTASQEPFGTGGNVTSISDVTFSYQVI) are extracellular. Asn-10, Asn-11, and Asn-24 each carry an N-linked (GlcNAc...) asparagine glycan. The chain crosses the membrane as a helical span at residues 39–59 (TSLLLGTLIFCAVLGNACVVA). Over 60-73 (AIALERSLQNVANY) the chain is Cytoplasmic. The chain crosses the membrane as a helical span at residues 74 to 98 (LIGSLAVTDLMVSVLVLPMAALYQV). Over 99–107 (LNKWTLGQV) the chain is Extracellular. A helical transmembrane segment spans residues 108-132 (TCDLFIALDVLCCTSSILHLCAIAL). Residues Cys-109 and Cys-187 are joined by a disulfide bond. Residues Asp-116 and Cys-120 each coordinate serotonin. A DRY motif; important for ligand-induced conformation changes motif is present at residues 133–135 (DRY). The Cytoplasmic segment spans residues 133 to 152 (DRYWAITDPIDYVNKRTPRR). The chain crosses the membrane as a helical span at residues 153–174 (AAALISLTWLIGFLISIPPMLG). The Extracellular segment spans residues 175–193 (WRTPEDRSDPDACTISKDH). Residues 194-216 (GYTIYSTFGAFYIPLLLMLVLYG) traverse the membrane as a helical segment. Topologically, residues 217–346 (RIFRAARFRI…LARERKTVKT (130 aa)) are cytoplasmic. Residues 235–261 (KKGAGTSLGTSSAPPPKKSLNGQPGSG) are disordered. Lys-345, Thr-346, and Gly-352 together coordinate 1D-myo-inositol 4-phosphate. Residues 347–370 (LGIIMGTFILCWLPFFIVALVLPF) traverse the membrane as a helical segment. Over 371–378 (CESSCHMP) the chain is Extracellular. A helical transmembrane segment spans residues 379–403 (ALLGAIINWLGYSNSLLNPVIYAYF). The short motif at 396-400 (NPVIY) is the NPxxY motif; important for ligand-induced conformation changes and signaling element. 1D-myo-inositol 4-phosphate is bound by residues Phe-403, Asn-404, and Lys-405. Over 404–422 (NKDFQNAFKKIIKCKFCRR) the chain is Cytoplasmic.

Belongs to the G-protein coupled receptor 1 family. 5-hydroxytryptamine receptor subfamily. HTR1A sub-subfamily. In terms of assembly, heterodimer; heterodimerizes with GPER1. Interacts with YIF1B. Interacts with GPR39 and GALR1. Detected in hypothalamus, mesencephalon, amygdala, medulla, thalamus, septum and hippocampus.

The protein resides in the cell membrane. It is found in the cell projection. Its subcellular location is the dendrite. With respect to regulation, G-protein coupled receptor activity is regulated by lipids: phosphatidylinositol 4-phosphate increases HTR1A-mediated activity. G-protein coupled receptor for 5-hydroxytryptamine (serotonin). Also functions as a receptor for various drugs and psychoactive substances. Ligand binding causes a conformation change that triggers signaling via guanine nucleotide-binding proteins (G proteins) and modulates the activity of downstream effectors, such as adenylate cyclase. HTR1A is coupled to G(i)/G(o) G alpha proteins and mediates inhibitory neurotransmission: signaling inhibits adenylate cyclase activity and activates a phosphatidylinositol-calcium second messenger system that regulates the release of Ca(2+) ions from intracellular stores. Beta-arrestin family members regulate signaling by mediating both receptor desensitization and resensitization processes. This Rattus norvegicus (Rat) protein is 5-hydroxytryptamine receptor 1A.